We begin with the raw amino-acid sequence, 85 residues long: Polcalcin Bet v 4 (85 aa).

2 consecutive EF-hand domains span residues 7-42 (QDKA…LGSI) and 42-77 (ITPD…NRGL). Residues Asp20, Asn22, Asp24, Lys26, Glu31, Asp55, Asp57, Asp59, and Glu66 each contribute to the Ca(2+) site.

As to quaternary structure, monomer.

The polypeptide is Polcalcin Bet v 4 (BETV4) (Betula pendula (European white birch)).